Consider the following 141-residue polypeptide: Large ribosomal subunit protein uL11 (141 aa).

It belongs to the universal ribosomal protein uL11 family. In terms of assembly, part of the ribosomal stalk of the 50S ribosomal subunit. Interacts with L10 and the large rRNA to form the base of the stalk. L10 forms an elongated spine to which L12 dimers bind in a sequential fashion forming a multimeric L10(L12)X complex. In terms of processing, one or more lysine residues are methylated.

Its function is as follows. Forms part of the ribosomal stalk which helps the ribosome interact with GTP-bound translation factors. The chain is Large ribosomal subunit protein uL11 from Thermotoga sp. (strain RQ2).